The primary structure comprises 267 residues: Putative transcription factor Ovo-like 1 (267 aa).

4 C2H2-type zinc fingers span residues 118 to 140 (FTCRVCQKAFTYQRMLNRHMKCH), 146 to 168 (HLCTYCGKGFNDTFDLKRHVRTH), 174 to 197 (YKCSLCDKAFTQRCSLESHLKKIH), and 213 to 235 (YVCEECGCTSESQEGHVLHLKEH).

As to expression, expressed in fetal kidney, and also in adult pancreas and placenta. Not expressed in intestine, peripheral blood lymphocytes and ovary.

Its subcellular location is the nucleus. Putative transcription factor. Involved in hair formation and spermatogenesis. May function in the differentiation and/or maintenance of the urogenital system. The chain is Putative transcription factor Ovo-like 1 (OVOL1) from Homo sapiens (Human).